We begin with the raw amino-acid sequence, 517 residues long: DNA-directed RNA polymerase subunit alpha (517 aa).

Belongs to the RNA polymerase alpha chain family. As to quaternary structure, in plastids the minimal PEP RNA polymerase catalytic core is composed of four subunits: alpha, beta, beta', and beta''. When a (nuclear-encoded) sigma factor is associated with the core the holoenzyme is formed, which can initiate transcription.

It is found in the plastid. The protein localises to the chloroplast. It catalyses the reaction RNA(n) + a ribonucleoside 5'-triphosphate = RNA(n+1) + diphosphate. DNA-dependent RNA polymerase catalyzes the transcription of DNA into RNA using the four ribonucleoside triphosphates as substrates. This Stigeoclonium helveticum (Green alga) protein is DNA-directed RNA polymerase subunit alpha (rpoA).